The sequence spans 89 residues: Large ribosomal subunit protein bL27 (89 aa).

The segment at 1 to 20 (MAHKKAGGSSRNGRDSESKR) is disordered.

Belongs to the bacterial ribosomal protein bL27 family.

In Bartonella bacilliformis (strain ATCC 35685 / KC583 / Herrer 020/F12,63), this protein is Large ribosomal subunit protein bL27.